The following is a 235-amino-acid chain: UDP-2,3-diacylglucosamine hydrolase (235 aa).

Mn(2+) is bound by residues D9, H11, D42, N80, and H115. A substrate-binding site is contributed by 80–81; sequence NR. Substrate-binding residues include D123, S161, K165, K168, and H196. Residues H196 and H198 each coordinate Mn(2+).

Belongs to the LpxH family. It depends on Mn(2+) as a cofactor.

The protein resides in the cell inner membrane. The enzyme catalyses UDP-2-N,3-O-bis[(3R)-3-hydroxytetradecanoyl]-alpha-D-glucosamine + H2O = 2-N,3-O-bis[(3R)-3-hydroxytetradecanoyl]-alpha-D-glucosaminyl 1-phosphate + UMP + 2 H(+). Its pathway is glycolipid biosynthesis; lipid IV(A) biosynthesis; lipid IV(A) from (3R)-3-hydroxytetradecanoyl-[acyl-carrier-protein] and UDP-N-acetyl-alpha-D-glucosamine: step 4/6. Functionally, hydrolyzes the pyrophosphate bond of UDP-2,3-diacylglucosamine to yield 2,3-diacylglucosamine 1-phosphate (lipid X) and UMP by catalyzing the attack of water at the alpha-P atom. Involved in the biosynthesis of lipid A, a phosphorylated glycolipid that anchors the lipopolysaccharide to the outer membrane of the cell. The polypeptide is UDP-2,3-diacylglucosamine hydrolase (Actinobacillus succinogenes (strain ATCC 55618 / DSM 22257 / CCUG 43843 / 130Z)).